Consider the following 345-residue polypeptide: Transcription factor 19 (345 aa).

The 58-residue stretch at 31-88 (YRLGHRADLCDVALRPQQEPGLISGIHAELHAEPRGDDWRVSLEDHSLQGTLVNNVRL) folds into the FHA domain. Disordered stretches follow at residues 138–167 (RSRGETRAGAGFRPMLPSQGAPQRPLSTLS) and 190–277 (LTFS…KYPV). The PHD-type zinc-finger motif lies at 293–342 (AAPCCCLPQEETVAWVQCDGCDVWFHVACVGCSIQAAREADFRCPGCRAG). Residues cysteine 296, cysteine 298, cysteine 310, cysteine 313, histidine 318, cysteine 321, cysteine 336, and cysteine 339 each contribute to the Zn(2+) site.

The protein localises to the nucleus. In terms of biological role, potential transcription factor that may play a role in the regulation of genes involved in cell cycle G1/S transition. May bind to regulatory elements of genes, including the promoter of the transcription factor FOXO1. In Macaca mulatta (Rhesus macaque), this protein is Transcription factor 19 (TCF19).